A 223-amino-acid polypeptide reads, in one-letter code: Family of serine hydrolases 2 (223 aa).

Catalysis depends on charge relay system residues Ser110, Asp174, and His203.

Belongs to the AB hydrolase 3 family.

The protein resides in the cytoplasm. Its function is as follows. Serine hydrolase of unknown specificity. The polypeptide is Family of serine hydrolases 2 (FSH2) (Saccharomyces cerevisiae (strain ATCC 204508 / S288c) (Baker's yeast)).